The sequence spans 345 residues: UDP-N-acetylenolpyruvoylglucosamine reductase (345 aa).

In terms of domain architecture, FAD-binding PCMH-type spans 25 to 193 (LPAHCTDFVS…VGVTFLLPKA (169 aa)). R169 is a catalytic residue. The active-site Proton donor is S237. E333 is an active-site residue.

The protein belongs to the MurB family. Requires FAD as cofactor.

It localises to the cytoplasm. It carries out the reaction UDP-N-acetyl-alpha-D-muramate + NADP(+) = UDP-N-acetyl-3-O-(1-carboxyvinyl)-alpha-D-glucosamine + NADPH + H(+). It functions in the pathway cell wall biogenesis; peptidoglycan biosynthesis. Cell wall formation. This Pseudoalteromonas atlantica (strain T6c / ATCC BAA-1087) protein is UDP-N-acetylenolpyruvoylglucosamine reductase.